The following is a 352-amino-acid chain: tRNA uridine(34) hydroxylase (352 aa).

Positions Ser144–Ser238 constitute a Rhodanese domain. Residue Cys198 is the Cysteine persulfide intermediate of the active site.

The protein belongs to the TrhO family.

The catalysed reaction is uridine(34) in tRNA + AH2 + O2 = 5-hydroxyuridine(34) in tRNA + A + H2O. In terms of biological role, catalyzes oxygen-dependent 5-hydroxyuridine (ho5U) modification at position 34 in tRNAs. The sequence is that of tRNA uridine(34) hydroxylase from Psychrobacter cryohalolentis (strain ATCC BAA-1226 / DSM 17306 / VKM B-2378 / K5).